A 197-amino-acid polypeptide reads, in one-letter code: V-type ATP synthase subunit E 2 (197 aa).

This sequence belongs to the V-ATPase E subunit family.

Functionally, produces ATP from ADP in the presence of a proton gradient across the membrane. The polypeptide is V-type ATP synthase subunit E 2 (Clostridium tetani (strain Massachusetts / E88)).